The chain runs to 232 residues: Sugar fermentation stimulation protein homolog (232 aa).

It belongs to the SfsA family.

This chain is Sugar fermentation stimulation protein homolog, found in Geobacter sulfurreducens (strain ATCC 51573 / DSM 12127 / PCA).